Reading from the N-terminus, the 559-residue chain is Innexin-10 (559 aa).

The next 4 helical transmembrane spans lie at 28-48 (YFTC…QFGG), 102-122 (QWVP…SLLW), 182-202 (FLWL…YLCT), and 283-303 (IFIL…GSFF). Disordered regions lie at residues 488 to 514 (EEKQ…YQNQ) and 527 to 559 (YRTP…STFK). Over residues 503–514 (YTNQNPTPYQNQ) the composition is skewed to low complexity. Positions 528-559 (RTPSLSRGTDSRPVSTATDTDQTKKQSMSTFK) are enriched in polar residues.

This sequence belongs to the pannexin family.

It is found in the cell membrane. The protein localises to the cell junction. Its subcellular location is the gap junction. Structural component of the gap junctions. This Caenorhabditis elegans protein is Innexin-10 (inx-10).